Consider the following 726-residue polypeptide: Transferrin (726 aa).

Residues 1–16 (MLLCLTLLFSASAVLA) form the signal peptide. 2 Transferrin-like domains span residues 29–367 (YKVC…ERDT) and 374–719 (VRFC…VIRA). Intrachain disulfides connect Cys-32-Cys-63 and Cys-41-Cys-54. Asp-78 and Tyr-111 together coordinate Fe(3+). Intrachain disulfides connect Cys-135-Cys-231, Cys-184-Cys-210, Cys-207-Cys-216, and Cys-274-Cys-287. 4 residues coordinate hydrogencarbonate: Thr-137, Arg-141, Val-143, and Gly-144. N-linked (GlcNAc...) asparagine glycosylation is present at Asn-162. A Fe(3+)-binding site is contributed by Tyr-225. 2 N-linked (GlcNAc...) asparagine glycosylation sites follow: Asn-337 and Asn-358. Intrachain disulfides connect Cys-377–Cys-414 and Cys-387–Cys-405. Positions 429 and 457 each coordinate Fe(3+). The cysteines at positions 481 and 562 are disulfide-linked. Hydrogencarbonate contacts are provided by Thr-483, Arg-487, Ala-489, and Gly-490. The Fe(3+) site is built by Tyr-573 and His-642.

Belongs to the transferrin family.

It is found in the secreted. Transferrins are iron binding transport proteins which bind Fe(3+) ion in association with the binding of an anion, usually bicarbonate. In Blaberus discoidalis (Tropical cockroach), this protein is Transferrin.